The sequence spans 104 residues: MLRRETSTIYRTHKKSNSSILRSQRDQTRVDSLVEESPMGDFGINNQPTQPGVIYYFVELTNLGIQENTSSNNNNNNNHGDDENGSRYGHGSSLGGDVHSRRCS.

2 disordered regions span residues 1–48 (MLRR…NNQP) and 66–104 (QENT…RRCS).

This is an uncharacterized protein from Saccharomyces cerevisiae (strain ATCC 204508 / S288c) (Baker's yeast).